A 282-amino-acid polypeptide reads, in one-letter code: Pantothenate synthetase (282 aa).

Residue 30-37 (MGNLHDGH) participates in ATP binding. His-37 (proton donor) is an active-site residue. Position 61 (Gln-61) interacts with (R)-pantoate. Gln-61 serves as a coordination point for beta-alanine. 149-152 (GNKD) lines the ATP pocket. Gln-155 contributes to the (R)-pantoate binding site. ATP is bound by residues Ala-178 and 186-189 (MSSR).

This sequence belongs to the pantothenate synthetase family. As to quaternary structure, homodimer.

Its subcellular location is the cytoplasm. It catalyses the reaction (R)-pantoate + beta-alanine + ATP = (R)-pantothenate + AMP + diphosphate + H(+). It functions in the pathway cofactor biosynthesis; (R)-pantothenate biosynthesis; (R)-pantothenate from (R)-pantoate and beta-alanine: step 1/1. Its function is as follows. Catalyzes the condensation of pantoate with beta-alanine in an ATP-dependent reaction via a pantoyl-adenylate intermediate. The protein is Pantothenate synthetase of Marinomonas sp. (strain MWYL1).